The primary structure comprises 297 residues: Phosphatidylglycerol--prolipoprotein diacylglyceryl transferase (297 aa).

4 helical membrane-spanning segments follow: residues 20 to 40, 58 to 78, 104 to 124, and 133 to 153; these read FLTIRWYGLLISISVVIGLFI, ILPSLIISSIIGARAYYVIFE, IAIWQGGIAIHGGLIGGFLCI, and IHLKTFIDILIPSIILGQSIG. Position 154 (Arg-154) interacts with a 1,2-diacyl-sn-glycero-3-phospho-(1'-sn-glycerol). 3 helical membrane-spanning segments follow: residues 194-214, 225-245, and 266-286; these read TFIYESLWNFLIFILLITIFY, GFISCLYLIGYSFGRFWIEGL, and AQFISIFLFSSGLIGLFFLRL.

Belongs to the Lgt family.

The protein localises to the cell inner membrane. It carries out the reaction L-cysteinyl-[prolipoprotein] + a 1,2-diacyl-sn-glycero-3-phospho-(1'-sn-glycerol) = an S-1,2-diacyl-sn-glyceryl-L-cysteinyl-[prolipoprotein] + sn-glycerol 1-phosphate + H(+). The protein operates within protein modification; lipoprotein biosynthesis (diacylglyceryl transfer). Functionally, catalyzes the transfer of the diacylglyceryl group from phosphatidylglycerol to the sulfhydryl group of the N-terminal cysteine of a prolipoprotein, the first step in the formation of mature lipoproteins. This is Phosphatidylglycerol--prolipoprotein diacylglyceryl transferase from Prochlorococcus marinus subsp. pastoris (strain CCMP1986 / NIES-2087 / MED4).